A 76-amino-acid chain; its full sequence is UPF0346 protein OEOE_1017 (76 aa).

Belongs to the UPF0346 family.

The sequence is that of UPF0346 protein OEOE_1017 from Oenococcus oeni (strain ATCC BAA-331 / PSU-1).